We begin with the raw amino-acid sequence, 467 residues long: Ergochrome gene cluster transcriptional coactivator CPUR_05432 (467 aa).

The HTH iclR-type domain occupies 109–179; the sequence is IAIQCEMLGS…RRGYVAHTPL (71 aa). A DNA-binding region (H-T-H motif) is located at residues 139 to 158; that stretch reads IQDVANLSNVPEQQLAQMIG.

Its subcellular location is the nucleus. In terms of biological role, transcriptional coactivator; part of the gene cluster responsible for the typical purple-black color of the ergot sclerotia. The ergochrome gene cluster produces several ergot pigments including the yellow ergochrome secalonic acid and its derivatives, as well as the red anthraquinones endocrocin and clavorubin. With CPUR_05433, coregulates the production of geodin. This chain is Ergochrome gene cluster transcriptional coactivator CPUR_05432, found in Claviceps purpurea (strain 20.1) (Ergot fungus).